The chain runs to 156 residues: ATP synthase subunit b (156 aa).

The helical transmembrane segment at 7–26 (LIGQAIWFALFIWITMKYVW) threads the bilayer.

This sequence belongs to the ATPase B chain family. As to quaternary structure, F-type ATPases have 2 components, F(1) - the catalytic core - and F(0) - the membrane proton channel. F(1) has five subunits: alpha(3), beta(3), gamma(1), delta(1), epsilon(1). F(0) has three main subunits: a(1), b(2) and c(10-14). The alpha and beta chains form an alternating ring which encloses part of the gamma chain. F(1) is attached to F(0) by a central stalk formed by the gamma and epsilon chains, while a peripheral stalk is formed by the delta and b chains.

Its subcellular location is the cell inner membrane. Its function is as follows. F(1)F(0) ATP synthase produces ATP from ADP in the presence of a proton or sodium gradient. F-type ATPases consist of two structural domains, F(1) containing the extramembraneous catalytic core and F(0) containing the membrane proton channel, linked together by a central stalk and a peripheral stalk. During catalysis, ATP synthesis in the catalytic domain of F(1) is coupled via a rotary mechanism of the central stalk subunits to proton translocation. In terms of biological role, component of the F(0) channel, it forms part of the peripheral stalk, linking F(1) to F(0). In Dechloromonas aromatica (strain RCB), this protein is ATP synthase subunit b.